The sequence spans 211 residues: Small ribosomal subunit protein uS3 (211 aa).

The 70-residue stretch at 16–85 (IDEYFKTKLV…NPQIEVKQVE (70 aa)) folds into the KH type-2 domain.

The protein belongs to the universal ribosomal protein uS3 family. Part of the 30S ribosomal subunit.

Functionally, binds the lower part of the 30S subunit head. The protein is Small ribosomal subunit protein uS3 of Methanococcus maripaludis (strain C5 / ATCC BAA-1333).